The chain runs to 332 residues: MKAIEWRNNRLIILDQTLLPLEEKYLELNDYHAVAEAIKTLRVRGAPSIGVAAAYGIAFGALSIETRYCSEFLPLYQQISAEIASTRPTAKNLFMAVERMDHVVASGTDVLQVKISLVDEAVKIHREEEEASRKISTFGADLIQPGWTVLTHCNAGPLATAGYGTALGVIIAAHQQNKGISAFATETRPLLQGARLTALELKEAGVPFKLITDSMAGHFMKKGVINAVVVGADRIARNGDTANKIGTYSLAVLALAHGIPFYVAAPSSTFDKSIESGNDIVIEERKPEEITYLRGQRIAPENIDVANPAFDVTPANLIAAFITENGIIRRGE.

Residues 44-46, R87, and Q192 each bind substrate; that span reads RGA. Catalysis depends on D233, which acts as the Proton donor. A substrate-binding site is contributed by 243-244; that stretch reads NK.

It belongs to the eIF-2B alpha/beta/delta subunits family. MtnA subfamily.

It carries out the reaction 5-(methylsulfanyl)-alpha-D-ribose 1-phosphate = 5-(methylsulfanyl)-D-ribulose 1-phosphate. It participates in amino-acid biosynthesis; L-methionine biosynthesis via salvage pathway; L-methionine from S-methyl-5-thio-alpha-D-ribose 1-phosphate: step 1/6. Its function is as follows. Catalyzes the interconversion of methylthioribose-1-phosphate (MTR-1-P) into methylthioribulose-1-phosphate (MTRu-1-P). The sequence is that of Methylthioribose-1-phosphate isomerase from Dehalococcoides mccartyi (strain ATCC BAA-2100 / JCM 16839 / KCTC 5957 / BAV1).